The primary structure comprises 39 residues: Phospholipase A2 (39 aa).

His-36 is an active-site residue.

The protein belongs to the phospholipase A2 family. Group III subfamily. Ca(2+) is required as a cofactor. As to expression, expressed by the venom gland.

It is found in the secreted. It carries out the reaction a 1,2-diacyl-sn-glycero-3-phosphocholine + H2O = a 1-acyl-sn-glycero-3-phosphocholine + a fatty acid + H(+). In terms of biological role, PLA2 catalyzes the calcium-dependent hydrolysis of the 2-acyl groups in 3-sn-phosphoglycerides. This Heloderma horridum horridum (Mexican beaded lizard) protein is Phospholipase A2.